Here is a 354-residue protein sequence, read N- to C-terminus: Chorismate synthase (354 aa).

Residue Arg48 coordinates NADP(+). Residues 125-127 (RSS), 239-240 (NA), Gly280, 295-299 (KPVAT), and Arg321 each bind FMN.

Belongs to the chorismate synthase family. In terms of assembly, homotetramer. FMNH2 is required as a cofactor.

The catalysed reaction is 5-O-(1-carboxyvinyl)-3-phosphoshikimate = chorismate + phosphate. It participates in metabolic intermediate biosynthesis; chorismate biosynthesis; chorismate from D-erythrose 4-phosphate and phosphoenolpyruvate: step 7/7. Catalyzes the anti-1,4-elimination of the C-3 phosphate and the C-6 proR hydrogen from 5-enolpyruvylshikimate-3-phosphate (EPSP) to yield chorismate, which is the branch point compound that serves as the starting substrate for the three terminal pathways of aromatic amino acid biosynthesis. This reaction introduces a second double bond into the aromatic ring system. This Christiangramia forsetii (strain DSM 17595 / CGMCC 1.15422 / KT0803) (Gramella forsetii) protein is Chorismate synthase.